We begin with the raw amino-acid sequence, 391 residues long: Digeranylgeranylglycerophospholipid reductase (391 aa).

Positions 18, 37, 48, 49, 51, 98, 122, 279, 291, and 292 each coordinate FAD.

Belongs to the geranylgeranyl reductase family. DGGGPL reductase subfamily. The cofactor is FAD.

The catalysed reaction is a 2,3-bis-O-phytanyl-sn-glycerol 1-phospholipid + 8 A = a 2,3-bis-O-(geranylgeranyl)-sn-glycerol 1-phospholipid + 8 AH2. The enzyme catalyses 2,3-bis-O-(phytanyl)-sn-glycerol 1-phosphate + 8 A = 2,3-bis-O-(geranylgeranyl)-sn-glycerol 1-phosphate + 8 AH2. It carries out the reaction CDP-2,3-bis-O-(geranylgeranyl)-sn-glycerol + 8 AH2 = CDP-2,3-bis-O-(phytanyl)-sn-glycerol + 8 A. It catalyses the reaction archaetidylserine + 8 AH2 = 2,3-bis-O-phytanyl-sn-glycero-3-phospho-L-serine + 8 A. It participates in membrane lipid metabolism; glycerophospholipid metabolism. In terms of biological role, is involved in the reduction of 2,3-digeranylgeranylglycerophospholipids (unsaturated archaeols) into 2,3-diphytanylglycerophospholipids (saturated archaeols) in the biosynthesis of archaeal membrane lipids. Catalyzes the formation of archaetidic acid (2,3-di-O-phytanyl-sn-glyceryl phosphate) from 2,3-di-O-geranylgeranylglyceryl phosphate (DGGGP) via the hydrogenation of each double bond of the isoprenoid chains. Is also probably able to reduce double bonds of geranyl groups in CDP-2,3-bis-O-(geranylgeranyl)-sn-glycerol and archaetidylserine, thus acting at various stages in the biosynthesis of archaeal membrane lipids. This Methanocaldococcus jannaschii (strain ATCC 43067 / DSM 2661 / JAL-1 / JCM 10045 / NBRC 100440) (Methanococcus jannaschii) protein is Digeranylgeranylglycerophospholipid reductase.